Consider the following 219-residue polypeptide: Deoxyribose-phosphate aldolase (219 aa).

The Proton donor/acceptor role is filled by aspartate 89. Lysine 151 (schiff-base intermediate with acetaldehyde) is an active-site residue. The active-site Proton donor/acceptor is the lysine 180.

Belongs to the DeoC/FbaB aldolase family. DeoC type 1 subfamily.

It localises to the cytoplasm. It catalyses the reaction 2-deoxy-D-ribose 5-phosphate = D-glyceraldehyde 3-phosphate + acetaldehyde. Its pathway is carbohydrate degradation; 2-deoxy-D-ribose 1-phosphate degradation; D-glyceraldehyde 3-phosphate and acetaldehyde from 2-deoxy-alpha-D-ribose 1-phosphate: step 2/2. Its function is as follows. Catalyzes a reversible aldol reaction between acetaldehyde and D-glyceraldehyde 3-phosphate to generate 2-deoxy-D-ribose 5-phosphate. This Coprothermobacter proteolyticus (strain ATCC 35245 / DSM 5265 / OCM 4 / BT) protein is Deoxyribose-phosphate aldolase.